Here is a 131-residue protein sequence, read N- to C-terminus: Global transcriptional regulator Spx 1 (131 aa).

Cysteines 10 and 13 form a disulfide.

It belongs to the ArsC family. Spx subfamily. In terms of assembly, interacts with the C-terminal domain of the alpha subunit of the RNAP.

The protein resides in the cytoplasm. In terms of biological role, global transcriptional regulator that plays a key role in stress response and exerts either positive or negative regulation of genes. Acts by interacting with the C-terminal domain of the alpha subunit of the RNA polymerase (RNAP). This interaction can enhance binding of RNAP to the promoter region of target genes and stimulate their transcription, or block interaction of RNAP with activator. In Oceanobacillus iheyensis (strain DSM 14371 / CIP 107618 / JCM 11309 / KCTC 3954 / HTE831), this protein is Global transcriptional regulator Spx 1.